We begin with the raw amino-acid sequence, 114 residues long: UPF0342 protein NWMN_1737 (114 aa).

This sequence belongs to the UPF0342 family.

This chain is UPF0342 protein NWMN_1737, found in Staphylococcus aureus (strain Newman).